Consider the following 372-residue polypeptide: Autophagy-related protein 18 (372 aa).

WD repeat units lie at residues 176–216 (AHKS…KSLS) and 221–260 (SIPA…SNSS).

This sequence belongs to the WD repeat PROPPIN family.

Its subcellular location is the preautophagosomal structure membrane. It is found in the vacuole membrane. Functionally, may be involved in cytoplasm to vacuole transport and autophagy. The chain is Autophagy-related protein 18 (atg18) from Dictyostelium discoideum (Social amoeba).